Here is a 227-residue protein sequence, read N- to C-terminus: Phosphoglycolate phosphatase (227 aa).

Residue Asp-14 is the Nucleophile of the active site. 3 residues coordinate Mg(2+): Asp-14, Asp-16, and Asp-177.

It belongs to the HAD-like hydrolase superfamily. CbbY/CbbZ/Gph/YieH family. The cofactor is Mg(2+).

The catalysed reaction is 2-phosphoglycolate + H2O = glycolate + phosphate. The protein operates within organic acid metabolism; glycolate biosynthesis; glycolate from 2-phosphoglycolate: step 1/1. In terms of biological role, specifically catalyzes the dephosphorylation of 2-phosphoglycolate. Is involved in the dissimilation of the intracellular 2-phosphoglycolate formed during the DNA repair of 3'-phosphoglycolate ends, a major class of DNA lesions induced by oxidative stress. In Thiobacillus denitrificans (strain ATCC 25259 / T1), this protein is Phosphoglycolate phosphatase.